Here is a 470-residue protein sequence, read N- to C-terminus: Cysteine--tRNA ligase (470 aa).

Cys27 is a Zn(2+) binding site. Residues 29–39 carry the 'HIGH' region motif; the sequence is PTVYNHIHIGN. Zn(2+) is bound by residues Cys207, His232, and Glu236. The 'KMSKS' region motif lies at 265-269; the sequence is KMAKS. Lys268 contributes to the ATP binding site.

The protein belongs to the class-I aminoacyl-tRNA synthetase family. Monomer. It depends on Zn(2+) as a cofactor.

Its subcellular location is the cytoplasm. It carries out the reaction tRNA(Cys) + L-cysteine + ATP = L-cysteinyl-tRNA(Cys) + AMP + diphosphate. The protein is Cysteine--tRNA ligase of Rubrobacter xylanophilus (strain DSM 9941 / JCM 11954 / NBRC 16129 / PRD-1).